A 144-amino-acid chain; its full sequence is Large ribosomal subunit protein uL16 (144 aa).

It belongs to the universal ribosomal protein uL16 family. Part of the 50S ribosomal subunit.

Its function is as follows. Binds 23S rRNA and is also seen to make contacts with the A and possibly P site tRNAs. The sequence is that of Large ribosomal subunit protein uL16 from Ligilactobacillus salivarius (strain UCC118) (Lactobacillus salivarius).